The primary structure comprises 89 residues: Putative protein p54 (89 aa).

The chain is Putative protein p54 (54) from Acyrthosiphon pisum secondary endosymbiont phage 1 (Bacteriophage APSE-1).